We begin with the raw amino-acid sequence, 55 residues long: Neurotoxin BmKX-A1-S31 (55 aa).

Residues Met1 to Gly23 form the signal peptide. 3 cysteine pairs are disulfide-bonded: Cys30/Cys45, Cys36/Cys50, and Cys39/Cys53.

In terms of tissue distribution, expressed by the venom gland.

It is found in the secreted. In Olivierus martensii (Manchurian scorpion), this protein is Neurotoxin BmKX-A1-S31.